Consider the following 477-residue polypeptide: Exodeoxyribonuclease 7 large subunit (477 aa).

The disordered stretch occupies residues 456–477; that stretch reads GGTVAPRKAPPKKPGGGQGSLL.

Belongs to the XseA family. As to quaternary structure, heterooligomer composed of large and small subunits.

It localises to the cytoplasm. The catalysed reaction is Exonucleolytic cleavage in either 5'- to 3'- or 3'- to 5'-direction to yield nucleoside 5'-phosphates.. Its function is as follows. Bidirectionally degrades single-stranded DNA into large acid-insoluble oligonucleotides, which are then degraded further into small acid-soluble oligonucleotides. The chain is Exodeoxyribonuclease 7 large subunit from Parvibaculum lavamentivorans (strain DS-1 / DSM 13023 / NCIMB 13966).